We begin with the raw amino-acid sequence, 486 residues long: Ribulose bisphosphate carboxylase large chain 3 (486 aa).

Positions 125 and 175 each coordinate substrate. The active-site Proton acceptor is the Lys177. Lys179 contributes to the substrate binding site. The Mg(2+) site is built by Lys203, Asp205, and Glu206. At Lys203 the chain carries N6-carboxylysine. The Proton acceptor role is filled by His295. 3 residues coordinate substrate: Arg296, His328, and Ser380.

Belongs to the RuBisCO large chain family. Type I subfamily. As to quaternary structure, heterohexadecamer of 8 large chains and 8 small chains. It depends on Mg(2+) as a cofactor.

The enzyme catalyses 2 (2R)-3-phosphoglycerate + 2 H(+) = D-ribulose 1,5-bisphosphate + CO2 + H2O. The catalysed reaction is D-ribulose 1,5-bisphosphate + O2 = 2-phosphoglycolate + (2R)-3-phosphoglycerate + 2 H(+). RuBisCO catalyzes two reactions: the carboxylation of D-ribulose 1,5-bisphosphate, the primary event in carbon dioxide fixation, as well as the oxidative fragmentation of the pentose substrate. Both reactions occur simultaneously and in competition at the same active site. The sequence is that of Ribulose bisphosphate carboxylase large chain 3 from Bradyrhizobium sp. (strain BTAi1 / ATCC BAA-1182).